We begin with the raw amino-acid sequence, 234 residues long: Ribose-5-phosphate isomerase A (234 aa).

Residues 35–38 (SGTT), 91–94 (DGAD), and 105–108 (KGGG) contribute to the substrate site. Catalysis depends on glutamate 114, which acts as the Proton acceptor. Lysine 132 lines the substrate pocket.

The protein belongs to the ribose 5-phosphate isomerase family. In terms of assembly, homodimer.

The catalysed reaction is aldehydo-D-ribose 5-phosphate = D-ribulose 5-phosphate. It functions in the pathway carbohydrate degradation; pentose phosphate pathway; D-ribose 5-phosphate from D-ribulose 5-phosphate (non-oxidative stage): step 1/1. Catalyzes the reversible conversion of ribose-5-phosphate to ribulose 5-phosphate. In Methanococcus aeolicus (strain ATCC BAA-1280 / DSM 17508 / OCM 812 / Nankai-3), this protein is Ribose-5-phosphate isomerase A.